The sequence spans 501 residues: 2,3-bisphosphoglycerate-independent phosphoglycerate mutase (501 aa).

The Mn(2+) site is built by aspartate 12 and serine 62. The Phosphoserine intermediate role is filled by serine 62. Substrate-binding positions include histidine 121, 150–151 (RD), arginine 182, arginine 188, 253–256 (RSDR), and lysine 322. Residues aspartate 389, histidine 393, aspartate 430, histidine 431, and histidine 449 each contribute to the Mn(2+) site.

This sequence belongs to the BPG-independent phosphoglycerate mutase family. Monomer. It depends on Mn(2+) as a cofactor.

It carries out the reaction (2R)-2-phosphoglycerate = (2R)-3-phosphoglycerate. Its pathway is carbohydrate degradation; glycolysis; pyruvate from D-glyceraldehyde 3-phosphate: step 3/5. Its function is as follows. Catalyzes the interconversion of 2-phosphoglycerate and 3-phosphoglycerate. This Ehrlichia ruminantium (strain Gardel) protein is 2,3-bisphosphoglycerate-independent phosphoglycerate mutase.